Consider the following 447-residue polypeptide: Cysteine--tRNA ligase (447 aa).

Cysteine 28 lines the Zn(2+) pocket. The 'HIGH' region motif lies at 30-40; sequence PTVYNYIHIGN. Positions 211, 236, and 240 each coordinate Zn(2+). The 'KMSKS' region motif lies at 268-272; it reads KMSKS. Lysine 271 serves as a coordination point for ATP.

Belongs to the class-I aminoacyl-tRNA synthetase family. Monomer. Zn(2+) serves as cofactor.

It localises to the cytoplasm. The enzyme catalyses tRNA(Cys) + L-cysteine + ATP = L-cysteinyl-tRNA(Cys) + AMP + diphosphate. This is Cysteine--tRNA ligase from Streptococcus pyogenes serotype M18 (strain MGAS8232).